Reading from the N-terminus, the 446-residue chain is Chromosomal replication initiator protein DnaA (446 aa).

A domain I, interacts with DnaA modulators region spans residues Met1–Pro81. Residues Pro81 to Ser109 are domain II. Residues Met110–Ser326 form a domain III, AAA+ region region. ATP is bound by residues Gly154, Gly156, Lys157, and Thr158. The interval Ser327–Lys446 is domain IV, binds dsDNA.

It belongs to the DnaA family. As to quaternary structure, oligomerizes as a right-handed, spiral filament on DNA at oriC.

Its subcellular location is the cytoplasm. In terms of biological role, plays an essential role in the initiation and regulation of chromosomal replication. ATP-DnaA binds to the origin of replication (oriC) to initiate formation of the DNA replication initiation complex once per cell cycle. Binds the DnaA box (a 9 base pair repeat at the origin) and separates the double-stranded (ds)DNA. Forms a right-handed helical filament on oriC DNA; dsDNA binds to the exterior of the filament while single-stranded (ss)DNA is stabiized in the filament's interior. The ATP-DnaA-oriC complex binds and stabilizes one strand of the AT-rich DNA unwinding element (DUE), permitting loading of DNA polymerase. After initiation quickly degrades to an ADP-DnaA complex that is not apt for DNA replication. Binds acidic phospholipids. The chain is Chromosomal replication initiator protein DnaA from Bacillus cytotoxicus (strain DSM 22905 / CIP 110041 / 391-98 / NVH 391-98).